The primary structure comprises 424 residues: UPF0053 protein MG146 homolog (424 aa).

The 186-residue stretch at 6–191 (SGGLLALIII…EQNGLFTKED (186 aa)) folds into the CNNM transmembrane domain. Transmembrane regions (helical) follow at residues 7–27 (GGLLALIIISIILLACISAVV), 71–91 (LITILVANNIVAILVSNILFL), 101–121 (AISSALNLLISGVLLLMLCEI), and 135–155 (LVYFAVVVYFFYILFWPITKL). CBS domains are found at residues 210–270 (MIKW…NEPF) and 275–335 (LLYP…EHDE).

Belongs to the UPF0053 family.

The protein localises to the cell membrane. This is UPF0053 protein MG146 homolog from Mycoplasma pneumoniae (strain ATCC 29342 / M129 / Subtype 1) (Mycoplasmoides pneumoniae).